The sequence spans 129 residues: RutC family protein PM1466 (129 aa).

The protein belongs to the RutC family.

This Pasteurella multocida (strain Pm70) protein is RutC family protein PM1466.